The chain runs to 719 residues: Phosphoribosylformylglycinamidine synthase subunit PurL (719 aa).

The active site involves histidine 47. Residues tyrosine 50 and lysine 89 each contribute to the ATP site. Residue glutamate 91 participates in Mg(2+) binding. Residues 92–95 and arginine 114 each bind substrate; that span reads SHNH. The active-site Proton acceptor is the histidine 93. Aspartate 115 is a binding site for Mg(2+). Glutamine 238 provides a ligand contact to substrate. Residue aspartate 266 coordinates Mg(2+). Residue 310-312 coordinates substrate; it reads ESQ. Positions 488 and 525 each coordinate ATP. Residue asparagine 526 coordinates Mg(2+). Serine 528 serves as a coordination point for substrate.

This sequence belongs to the FGAMS family. As to quaternary structure, monomer. Part of the FGAM synthase complex composed of 1 PurL, 1 PurQ and 2 PurS subunits.

It localises to the cytoplasm. The catalysed reaction is N(2)-formyl-N(1)-(5-phospho-beta-D-ribosyl)glycinamide + L-glutamine + ATP + H2O = 2-formamido-N(1)-(5-O-phospho-beta-D-ribosyl)acetamidine + L-glutamate + ADP + phosphate + H(+). It participates in purine metabolism; IMP biosynthesis via de novo pathway; 5-amino-1-(5-phospho-D-ribosyl)imidazole from N(2)-formyl-N(1)-(5-phospho-D-ribosyl)glycinamide: step 1/2. Part of the phosphoribosylformylglycinamidine synthase complex involved in the purines biosynthetic pathway. Catalyzes the ATP-dependent conversion of formylglycinamide ribonucleotide (FGAR) and glutamine to yield formylglycinamidine ribonucleotide (FGAM) and glutamate. The FGAM synthase complex is composed of three subunits. PurQ produces an ammonia molecule by converting glutamine to glutamate. PurL transfers the ammonia molecule to FGAR to form FGAM in an ATP-dependent manner. PurS interacts with PurQ and PurL and is thought to assist in the transfer of the ammonia molecule from PurQ to PurL. The chain is Phosphoribosylformylglycinamidine synthase subunit PurL from Cereibacter sphaeroides (strain ATCC 17025 / ATH 2.4.3) (Rhodobacter sphaeroides).